Reading from the N-terminus, the 115-residue chain is Large ribosomal subunit protein uL18 (115 aa).

The interval 1 to 24 (MISKPDKNKLRQKRHTRVRGKISG) is disordered. Basic residues predominate over residues 10 to 20 (LRQKRHTRVRG).

Belongs to the universal ribosomal protein uL18 family. As to quaternary structure, part of the 50S ribosomal subunit; part of the 5S rRNA/L5/L18/L25 subcomplex. Contacts the 5S and 23S rRNAs.

This is one of the proteins that bind and probably mediate the attachment of the 5S RNA into the large ribosomal subunit, where it forms part of the central protuberance. This chain is Large ribosomal subunit protein uL18, found in Lactococcus lactis subsp. cremoris (strain MG1363).